Here is a 388-residue protein sequence, read N- to C-terminus: Processive diacylglycerol beta-glucosyltransferase (388 aa).

It belongs to the glycosyltransferase 28 family. UgtP subfamily.

The protein localises to the cell membrane. The catalysed reaction is a 1,2-diacyl-3-O-(beta-D-glucopyranosyl)-sn-glycerol + UDP-alpha-D-glucose = a 1,2-diacyl-3-O-(beta-D-Glc-(1-&gt;6)-beta-D-Glc)-sn-glycerol + UDP + H(+). It catalyses the reaction a 1,2-diacyl-3-O-(beta-D-Glc-(1-&gt;6)-beta-D-Glc)-sn-glycerol + UDP-alpha-D-glucose = a 1,2-diacyl-3-O-(beta-D-Glc-(1-&gt;6)-beta-D-Glc-(1-&gt;6)-beta-D-Glc)-sn-glycerol + UDP + H(+). It carries out the reaction a 1,2-diacyl-sn-glycerol + UDP-alpha-D-glucose = a 1,2-diacyl-3-O-(beta-D-glucopyranosyl)-sn-glycerol + UDP + H(+). Its pathway is glycolipid metabolism; diglucosyl-diacylglycerol biosynthesis. In terms of biological role, processive glucosyltransferase involved in the biosynthesis of both the bilayer- and non-bilayer-forming membrane glucolipids. Is able to successively transfer up to three glucosyl residues to diacylglycerol (DAG), thereby catalyzing the formation of beta-monoglucosyl-DAG (3-O-(beta-D-glucopyranosyl)-1,2-diacyl-sn-glycerol), beta-diglucosyl-DAG (3-O-(beta-D-glucopyranosyl-beta-(1-&gt;6)-D-glucopyranosyl)-1,2-diacyl-sn-glycerol) and beta-triglucosyl-DAG (3-O-(beta-D-glucopyranosyl-beta-(1-&gt;6)-D-glucopyranosyl-beta-(1-&gt;6)-D-glucopyranosyl)-1,2-diacyl-sn-glycerol). Beta-diglucosyl-DAG is the predominant glycolipid found in Bacillales and is also used as a membrane anchor for lipoteichoic acid (LTA). The sequence is that of Processive diacylglycerol beta-glucosyltransferase from Bacillus cereus (strain G9842).